Here is a 328-residue protein sequence, read N- to C-terminus: Probable cell division protein WhiA (328 aa).

Residues 275-308 constitute a DNA-binding region (H-T-H motif); sequence SLEELGQLASPPMTKDAVAGRIRRLLSMADKRAE.

It belongs to the WhiA family.

Its function is as follows. Involved in cell division and chromosome segregation. The chain is Probable cell division protein WhiA from Corynebacterium urealyticum (strain ATCC 43042 / DSM 7109).